The sequence spans 1322 residues: Sal-like protein 1 (1322 aa).

A disordered region spans residues 1–41 (MSRRKQAKPQHFQSDPEVASLPRRDGDTEKGQPSRPTKSKD). Positions 22-41 (PRRDGDTEKGQPSRPTKSKD) are enriched in basic and acidic residues. The C2H2-type 1; atypical zinc-finger motif lies at 43–65 (HVCGRCCAEFFELSDLLLHKKSC). Residues 78–128 (PASPAKTFPPGPSLNDPDDQMKDAANKADQEDCSDLSEPKGLDREESMEVE) are disordered. 2 stretches are compositionally biased toward basic and acidic residues: residues 96–107 (DQMKDAANKADQ) and 114–124 (SEPKGLDREES). K440 participates in a covalent cross-link: Glycyl lysine isopeptide (Lys-Gly) (interchain with G-Cter in SUMO2). 2 consecutive C2H2-type zinc fingers follow at residues 450–472 (HKCR…LRSH) and 478–500 (FKCN…FQRH). The tract at residues 578-659 (PIPISHSAAS…GGPGGTTFTN (82 aa)) is disordered. Positions 584–594 (SAASPQGSVKS) are enriched in polar residues. S591, S594, and S596 each carry phosphoserine. Residues 629–645 (NMASSAVPTAGNSTLNS) are compositionally biased toward polar residues. Glycyl lysine isopeptide (Lys-Gly) (interchain with G-Cter in SUMO2) cross-links involve residues K672, K689, and K700. 3 C2H2-type zinc fingers span residues 705-727 (NECI…YRTH), 733-755 (FKCK…YSVH), and 765-787 (HSCP…IRMH). Disordered regions lie at residues 789 to 855 (GGQI…SSPL) and 891 to 961 (SMEG…GLSP). Over residues 819–832 (DLDNFSDENMEECP) the composition is skewed to acidic residues. A compositionally biased stretch (low complexity) spans 842-855 (SADASQDSLSSSPL). Over residues 898-935 (TNDSSSVGGDMESQSAGSPAISESTSSMQALSPSNSTQ) the composition is skewed to polar residues. A compositionally biased stretch (basic and acidic residues) spans 936-948 (EFHKSPGMEEKPQ). Phosphoserine is present on S940. Residues K946 and K981 each participate in a glycyl lysine isopeptide (Lys-Gly) (interchain with G-Cter in SUMO2) cross-link. 2 consecutive C2H2-type zinc fingers follow at residues 1000-1022 (TACD…YRSH) and 1028-1050 (FICT…MLTH). K1085 participates in a covalent cross-link: Glycyl lysine isopeptide (Lys-Gly) (interchain with G-Cter in SUMO2). The disordered stretch occupies residues 1094-1119 (VSPQDSKDAPTSHVPQGPLSSSATSP). 2 consecutive C2H2-type zinc fingers follow at residues 1133-1155 (HYCN…ERTH) and 1161-1183 (FACT…MGTH). Residues K1218, K1297, and K1317 each participate in a glycyl lysine isopeptide (Lys-Gly) (interchain with G-Cter in SUMO2) cross-link.

Belongs to the sal C2H2-type zinc-finger protein family. May associate with NuRD histone deacetylase complex (HDAC). Interacts with components of HDAC complex including HDAC1, HDAC2, RBBP4, RBPP7, MTA1 and MTA2. Interacts with CCNQ. Interacts with NSD2 (via PHD-type zinc fingers 1, 2 and 3). As to expression, expressed in the metanephric mesenchyme surrounding ureteric bud.

It is found in the nucleus. In terms of biological role, transcriptional repressor involved in organogenesis. Plays an essential role in ureteric bud invasion during kidney development. This Mus musculus (Mouse) protein is Sal-like protein 1 (Sall1).